The sequence spans 154 residues: 6,7-dimethyl-8-ribityllumazine synthase (154 aa).

5-amino-6-(D-ribitylamino)uracil is bound by residues tryptophan 22, 56-58 (AWE), and 80-82 (CVV). Residue 85 to 86 (DT) participates in (2S)-2-hydroxy-3-oxobutyl phosphate binding. Histidine 88 serves as the catalytic Proton donor. Asparagine 113 is a binding site for 5-amino-6-(D-ribitylamino)uracil. Arginine 127 contacts (2S)-2-hydroxy-3-oxobutyl phosphate.

It belongs to the DMRL synthase family. In terms of assembly, forms an icosahedral capsid composed of 60 subunits, arranged as a dodecamer of pentamers.

The enzyme catalyses (2S)-2-hydroxy-3-oxobutyl phosphate + 5-amino-6-(D-ribitylamino)uracil = 6,7-dimethyl-8-(1-D-ribityl)lumazine + phosphate + 2 H2O + H(+). It functions in the pathway cofactor biosynthesis; riboflavin biosynthesis; riboflavin from 2-hydroxy-3-oxobutyl phosphate and 5-amino-6-(D-ribitylamino)uracil: step 1/2. Catalyzes the formation of 6,7-dimethyl-8-ribityllumazine by condensation of 5-amino-6-(D-ribitylamino)uracil with 3,4-dihydroxy-2-butanone 4-phosphate. This is the penultimate step in the biosynthesis of riboflavin. The chain is 6,7-dimethyl-8-ribityllumazine synthase from Xylella fastidiosa (strain 9a5c).